The sequence spans 84 residues: uncharacterized protein (84 aa).

This is an uncharacterized protein from Bacillus subtilis (strain 168).